Consider the following 124-residue polypeptide: Phosphoribosyl-ATP pyrophosphatase (124 aa).

This sequence belongs to the PRA-PH family.

Its subcellular location is the cytoplasm. It catalyses the reaction 1-(5-phospho-beta-D-ribosyl)-ATP + H2O = 1-(5-phospho-beta-D-ribosyl)-5'-AMP + diphosphate + H(+). The protein operates within amino-acid biosynthesis; L-histidine biosynthesis; L-histidine from 5-phospho-alpha-D-ribose 1-diphosphate: step 2/9. In Ralstonia pickettii (strain 12J), this protein is Phosphoribosyl-ATP pyrophosphatase.